Consider the following 206-residue polypeptide: Large ribosomal subunit protein bL25 (206 aa).

Residues 184 to 206 (AEEAAAEVAEPEVIKKGKEEEEE) are disordered. The span at 195-206 (EVIKKGKEEEEE) shows a compositional bias: basic and acidic residues.

It belongs to the bacterial ribosomal protein bL25 family. CTC subfamily. In terms of assembly, part of the 50S ribosomal subunit; part of the 5S rRNA/L5/L18/L25 subcomplex. Contacts the 5S rRNA. Binds to the 5S rRNA independently of L5 and L18.

Its function is as follows. This is one of the proteins that binds to the 5S RNA in the ribosome where it forms part of the central protuberance. This is Large ribosomal subunit protein bL25 from Thermus thermophilus (strain ATCC BAA-163 / DSM 7039 / HB27).